The chain runs to 420 residues: Histidine--tRNA ligase (420 aa).

This sequence belongs to the class-II aminoacyl-tRNA synthetase family. In terms of assembly, homodimer.

The protein localises to the cytoplasm. It catalyses the reaction tRNA(His) + L-histidine + ATP = L-histidyl-tRNA(His) + AMP + diphosphate + H(+). This chain is Histidine--tRNA ligase (hisS), found in Thermotoga maritima (strain ATCC 43589 / DSM 3109 / JCM 10099 / NBRC 100826 / MSB8).